Reading from the N-terminus, the 601-residue chain is uncharacterized protein (601 aa).

3 helical membrane passes run Ile74–Ile94, Val104–Gly124, and Leu531–Tyr551.

It is found in the endoplasmic reticulum membrane. This is an uncharacterized protein from Schizosaccharomyces pombe (strain 972 / ATCC 24843) (Fission yeast).